We begin with the raw amino-acid sequence, 74 residues long: DNA-directed RNA polymerase subunit omega (74 aa).

The protein belongs to the RNA polymerase subunit omega family. As to quaternary structure, the RNAP catalytic core consists of 2 alpha, 1 beta/beta' and 1 omega subunit. When a sigma factor is associated with the core the holoenzyme is formed, which can initiate transcription.

It carries out the reaction RNA(n) + a ribonucleoside 5'-triphosphate = RNA(n+1) + diphosphate. Its function is as follows. Promotes RNA polymerase assembly. Latches the N- and C-terminal regions of the beta' subunit thereby facilitating its interaction with the beta and alpha subunits. This chain is DNA-directed RNA polymerase subunit omega, found in Helicobacter hepaticus (strain ATCC 51449 / 3B1).